A 353-amino-acid polypeptide reads, in one-letter code: Protein RecA (353 aa).

75 to 82 (GPESSGKT) lines the ATP pocket.

This sequence belongs to the RecA family.

It localises to the cytoplasm. Functionally, can catalyze the hydrolysis of ATP in the presence of single-stranded DNA, the ATP-dependent uptake of single-stranded DNA by duplex DNA, and the ATP-dependent hybridization of homologous single-stranded DNAs. It interacts with LexA causing its activation and leading to its autocatalytic cleavage. This Cupriavidus necator (Alcaligenes eutrophus) protein is Protein RecA.